A 342-amino-acid chain; its full sequence is Ferredoxin--NADP reductase (342 aa).

Residues C17, D36, Q44, Y49, V89, F124, D289, and T330 each coordinate FAD.

This sequence belongs to the ferredoxin--NADP reductase type 2 family. Homodimer. The cofactor is FAD.

The catalysed reaction is 2 reduced [2Fe-2S]-[ferredoxin] + NADP(+) + H(+) = 2 oxidized [2Fe-2S]-[ferredoxin] + NADPH. This Nitrobacter hamburgensis (strain DSM 10229 / NCIMB 13809 / X14) protein is Ferredoxin--NADP reductase.